The chain runs to 261 residues: MSGEQTPMCSMDLPEVKVKTSMAGRCRVFWYEQYVQPCIVELVGSALFIFIGCLSVIENSPNTGLLQPALAHGLALGLIIATLGNISGGHFNPAVSLAVTVIGGLKTMLLIPYWISQLFGGLIGAALAKVVSPEERFWNASGAAFAIVQEQEQVAEALGIEIILTMLLVLAVCMGAVNEKTMGPLAPFSIGFSVIVDILAGGSISGACMNPARAFGPAVMAGYWDFHWIYWLGPLLAGLFVGLLIRLLIGDEKTRLILKSR.

The Cytoplasmic portion of the chain corresponds to 1–36; the sequence is MSGEQTPMCSMDLPEVKVKTSMAGRCRVFWYEQYVQ. Residues 37–57 traverse the membrane as a helical segment; sequence PCIVELVGSALFIFIGCLSVI. Cysteine persulfide is present on cysteine 53. Cysteine sulfenic acid (-SOH) is present on cysteine 53. Over 58-84 the chain is Extracellular; the sequence is ENSPNTGLLQPALAHGLALGLIIATLG. Residues 85-105 traverse the membrane as a helical segment; sequence NISGGHFNPAVSLAVTVIGGL. The NPA 1 motif lies at 92-94; the sequence is NPA. Over 106-107 the chain is Cytoplasmic; it reads KT. Residues 108 to 128 form a helical membrane-spanning segment; sequence MLLIPYWISQLFGGLIGAALA. Residues 129–156 lie on the Extracellular side of the membrane; the sequence is KVVSPEERFWNASGAAFAIVQEQEQVAE. Asparagine 139 carries N-linked (GlcNAc...) asparagine glycosylation. A helical membrane pass occupies residues 157–177; sequence ALGIEIILTMLLVLAVCMGAV. At 178-183 the chain is on the cytoplasmic side; sequence NEKTMG. Residues 184 to 204 traverse the membrane as a helical segment; that stretch reads PLAPFSIGFSVIVDILAGGSI. At 205 to 228 the chain is on the extracellular side; it reads SGACMNPARAFGPAVMAGYWDFHW. The short motif at 210-212 is the NPA 2 element; the sequence is NPA. A helical transmembrane segment spans residues 229–249; sequence IYWLGPLLAGLFVGLLIRLLI. Residues 250-261 are Cytoplasmic-facing; the sequence is GDEKTRLILKSR.

The protein belongs to the MIP/aquaporin (TC 1.A.8) family. In terms of processing, sulfenylation at Cys-53(C53-SOH) when hydrogen peroxide flows through the AQP8 channel, making it susceptible to hydrogen sulfide produced by CBS. Post-translationally, persulfidation at Cys-53 is required to gate AQP8 channel; under stress condition, hydrogen peroxide accumulates in the cell leading to CBS activation that produces hydrogen sulfide inducing persulfidation of oxidized Cys-53 (C53-SOH). N-glycosylated. Expressed in placenta. Highly expressed in the epithelial layer of gall-bladders. Expressed in heart, kidney, submandibular gland, liver, small intestine, colon, testes, and epididymis. In testes, expressed in spermatogenic cells.

The protein localises to the cell membrane. It is found in the mitochondrion inner membrane. Its subcellular location is the apical cell membrane. The protein resides in the basolateral cell membrane. It localises to the smooth endoplasmic reticulum membrane. It catalyses the reaction H2O(in) = H2O(out). The enzyme catalyses urea(in) = urea(out). It carries out the reaction NH4(+)(in) = NH4(+)(out). The catalysed reaction is H2O2(out) = H2O2(in). It catalyses the reaction formamide(out) = formamide(in). The enzyme catalyses methylamine(out) = methylamine(in). Reversibly gated by a two-step sulfenylation-persulfidation process in cells undergoing diverse stresses. In terms of biological role, channel that allows the facilitated permeation of water and uncharged molecules, such as hydrogen peroxide and the neutral form of ammonia (NH3), through cellular membranes such as plasma membrane, inner mitochondrial membrane and endoplasmic reticulum membrane of several tissues. The transport of ammonia neutral form induces a parallel transport of proton, at alkaline pH when the concentration of ammonia is high. However, it is unclear whether the transport of proton takes place via the aquaporin or via an endogenous pathway. Also, may transport ammonia analogs such as formamide and methylamine, a transport favourited at basic pH due to the increase of unprotonated (neutral) form, which is expected to favor diffusion. In vitro, may be also permeable to urea but not to glycerol. Does not transport urea or glycerol. The water transport mechanism is mercury- and copper-sensitive and passive in response to osmotic driving forces. At the canicular plasma membrane, mediates the osmotic transport of water toward the bile canaliculus and facilitates the cAMP-induced bile canalicular water secretion, a process involved in bile formation. In addition, mediates the hydrogen peroxide release from hepatocyte mitochondria that modulates the SREBF2-mediated cholesterol synthesis and facilitates the mitochondrial ammonia uptake which is metabolized into urea, mainly under glucagon stimulation. In B cells, transports the CYBB-generated hydrogen peroxide from the external leaflet of the plasma membrane to the cytosol to promote B cell activation and differentiation for signal amplification. In the small intestine and colon system, mediates water transport through mitochondria and apical membrane of epithelial cells. May play an important role in the adaptive response of proximal tubule cells to acidosis possibly facilitating mitochondrial ammonia transport. The protein is Aquaporin-8 of Mus musculus (Mouse).